The primary structure comprises 136 residues: MSLLNILNIAGSAMSAQSEKINVIASNLANAESIVCKDGKFYPYIAKKVIFKLDPLKNSLIGGVKVFSIINDLNPMKLIYDPSNPLSNKNGYVLQTNVNPVSETINHISASRSYQANVEVLKTAKSMIMKTLSIGE.

Belongs to the flagella basal body rod proteins family. As to quaternary structure, the basal body constitutes a major portion of the flagellar organelle and consists of four rings (L,P,S, and M) mounted on a central rod. The rod consists of about 26 subunits of FlgG in the distal portion, and FlgB, FlgC and FlgF are thought to build up the proximal portion of the rod with about 6 subunits each.

It localises to the bacterial flagellum basal body. The chain is Flagellar basal-body rod protein FlgC (flgC) from Buchnera aphidicola subsp. Schizaphis graminum (strain Sg).